Here is a 348-residue protein sequence, read N- to C-terminus: Rhodopsin (348 aa).

At Met1 the chain carries N-acetylmethionine. Residues 1 to 36 (MNGTEGPNFYVPFSNKTGVVRSPFEYPQYYLAEPWQ) lie on the Extracellular side of the membrane. Residues Asn2 and Asn15 are each glycosylated (N-linked (GlcNAc...) asparagine). A helical transmembrane segment spans residues 37–61 (FSMLAAYMFLLIVLGFPINFLTLYV). The Cytoplasmic portion of the chain corresponds to 62–73 (TVQHKKLRTPLN). Residues 74–96 (YILLNLAVADLFMVFGGFTTTLY) form a helical membrane-spanning segment. Residues 97 to 110 (TSLHGYFVFGPTGC) are Extracellular-facing. The cysteines at positions 110 and 187 are disulfide-linked. The chain crosses the membrane as a helical span at residues 111 to 133 (NVEGFFATLGGEIALWSLVVLAI). The short motif at 134 to 136 (ERY) is the 'Ionic lock' involved in activated form stabilization element. Topologically, residues 134–152 (ERYVVVCKPMSNFRFGENH) are cytoplasmic. Residues 153-173 (AIMGVAFTWVMALACAAPPLA) traverse the membrane as a helical segment. Over 174–202 (GWSRYIPEGMQCSCGIDYYTLKPEVNNES) the chain is Extracellular. Residue Glu201 coordinates Zn(2+). The chain crosses the membrane as a helical span at residues 203-224 (FVIYMFVVHFTIPMIVIFFCYG). The Cytoplasmic portion of the chain corresponds to 225–252 (QLVFTVKEAAAQQQESATTQKAEKEVTR). The chain crosses the membrane as a helical span at residues 253–274 (MVIIMVIAFLICWVPYASVAFY). Residues 275 to 286 (IFTHQGSNFGPI) are Extracellular-facing. Gln279 contributes to the Zn(2+) binding site. Residues 287–308 (FMTLPAFFAKSASIYNPVIYIM) form a helical membrane-spanning segment. Lys296 bears the N6-(retinylidene)lysine mark. The Cytoplasmic segment spans residues 309-348 (MNKQFRNCMLTTICCGKNPFAEEEGATTVSKTETSQVAPA). S-palmitoyl cysteine attachment occurs at residues Cys322 and Cys323. The tract at residues 330–348 (EEEGATTVSKTETSQVAPA) is interaction with SAG. Residues Thr335 and Thr336 each carry the phosphothreonine modification. Ser338 carries the phosphoserine modification. Thr340 and Thr342 each carry phosphothreonine. Ser343 is modified (phosphoserine).

The protein belongs to the G-protein coupled receptor 1 family. Opsin subfamily. In terms of assembly, homodimer. May form a complex composed of RHO, GRK1 and RCVRN in a Ca(2+)-dependent manner; RCVRN prevents the interaction between GRK1 and RHO. Interacts with GRK1. Interacts (phosphorylated form) with SAG. Interacts with GNAT1. Interacts with GNAT3. SAG and G-proteins compete for a common binding site. Interacts with PRCD; the interaction promotes PRCD stability. Forms a complex with ASAP1 and ARF4. Forms a complex with ASAP1, RAB11A, Rabin8/RAB3IP, ARF4 and RAB11FIP3; the complex regulates Golgi-to-cilia rhodopsin/RHO transport in photoreceptors. In terms of processing, phosphorylated on some or all of the serine and threonine residues present in the C-terminal region. Contains one covalently linked retinal chromophore. Upon light absorption, the covalently bound 11-cis-retinal is converted to all-trans-retinal. After hydrolysis of the Schiff base and release of the covalently bound all-trans-retinal, active rhodopsin is regenerated by binding of a fresh molecule of 11-cis-retinal.

It localises to the membrane. It is found in the cell projection. The protein resides in the cilium. Its subcellular location is the photoreceptor outer segment. Functionally, photoreceptor required for image-forming vision at low light intensity. Required for photoreceptor cell viability after birth. Light-induced isomerization of 11-cis to all-trans retinal triggers a conformational change that activates signaling via G-proteins. Subsequent receptor phosphorylation mediates displacement of the bound G-protein alpha subunit by the arrestin SAG and terminates signaling. This Trichechus manatus (Caribbean manatee) protein is Rhodopsin (RHO).